Reading from the N-terminus, the 312-residue chain is tRNA dimethylallyltransferase (312 aa).

11 to 18 (GATATGKT) contributes to the ATP binding site. Residue 13–18 (TATGKT) participates in substrate binding. An interaction with substrate tRNA region spans residues 36–39 (DSRQ).

Belongs to the IPP transferase family. As to quaternary structure, monomer. Requires Mg(2+) as cofactor.

The catalysed reaction is adenosine(37) in tRNA + dimethylallyl diphosphate = N(6)-dimethylallyladenosine(37) in tRNA + diphosphate. Functionally, catalyzes the transfer of a dimethylallyl group onto the adenine at position 37 in tRNAs that read codons beginning with uridine, leading to the formation of N6-(dimethylallyl)adenosine (i(6)A). The protein is tRNA dimethylallyltransferase of Thermosynechococcus vestitus (strain NIES-2133 / IAM M-273 / BP-1).